Here is a 161-residue protein sequence, read N- to C-terminus: SsrA-binding protein (161 aa).

It belongs to the SmpB family.

The protein localises to the cytoplasm. Required for rescue of stalled ribosomes mediated by trans-translation. Binds to transfer-messenger RNA (tmRNA), required for stable association of tmRNA with ribosomes. tmRNA and SmpB together mimic tRNA shape, replacing the anticodon stem-loop with SmpB. tmRNA is encoded by the ssrA gene; the 2 termini fold to resemble tRNA(Ala) and it encodes a 'tag peptide', a short internal open reading frame. During trans-translation Ala-aminoacylated tmRNA acts like a tRNA, entering the A-site of stalled ribosomes, displacing the stalled mRNA. The ribosome then switches to translate the ORF on the tmRNA; the nascent peptide is terminated with the 'tag peptide' encoded by the tmRNA and targeted for degradation. The ribosome is freed to recommence translation, which seems to be the essential function of trans-translation. In Vibrio campbellii (strain ATCC BAA-1116), this protein is SsrA-binding protein.